Reading from the N-terminus, the 41-residue chain is Cytochrome b559 subunit beta (41 aa).

The chain crosses the membrane as a helical span at residues 16–32 (WLAIHALAVPTVFFLGS). H20 lines the heme pocket.

The protein belongs to the PsbE/PsbF family. Heterodimer of an alpha subunit and a beta subunit. PSII is composed of 1 copy each of membrane proteins PsbA, PsbB, PsbC, PsbD, PsbE, PsbF, PsbH, PsbI, PsbJ, PsbK, PsbL, PsbM, PsbT, PsbX, PsbY, PsbZ, Psb30/Ycf12, at least 3 peripheral proteins of the oxygen-evolving complex and a large number of cofactors. It forms dimeric complexes. The cofactor is heme b.

The protein resides in the plastid. Its subcellular location is the chloroplast thylakoid membrane. In terms of biological role, this b-type cytochrome is tightly associated with the reaction center of photosystem II (PSII). PSII is a light-driven water:plastoquinone oxidoreductase that uses light energy to abstract electrons from H(2)O, generating O(2) and a proton gradient subsequently used for ATP formation. It consists of a core antenna complex that captures photons, and an electron transfer chain that converts photonic excitation into a charge separation. This is Cytochrome b559 subunit beta from Oltmannsiellopsis viridis (Marine flagellate).